Reading from the N-terminus, the 550-residue chain is Retron Ec78 probable ATPase (550 aa).

Residues 93–100 (GNNGKGKT) carry the ATP-binding motif.

Its function is as follows. Probable ATPase component of antiviral defense system retron Ec78, composed of a non-coding RNA (ncRNA), a reverse transcriptase (RT), this protein and a putative HNH endonuclease. Expression of retron Ec78 confers protection against bacteriophage T5. At multiplicity of infection (MOI) of 0.02 cultures slow growth when infected with T5 but do not collapse, at MOI 2 cultures enter growth stasis. The polypeptide is Retron Ec78 probable ATPase (Escherichia coli).